A 248-amino-acid polypeptide reads, in one-letter code: Glutathione S-transferase omega-2 (248 aa).

The GST N-terminal domain occupies 22–101 (GVIRIYSMRF…YLDDVFPGRK (80 aa)). Cys32 functions as the Nucleophile in the catalytic mechanism. Residues Lys59, Val72, and 85–86 (ES) each bind glutathione. One can recognise a GST C-terminal domain in the interval 106–231 (DPYERARQKM…IFLGFLNLYF (126 aa)).

The protein belongs to the GST superfamily. Omega family.

It carries out the reaction RX + glutathione = an S-substituted glutathione + a halide anion + H(+). The catalysed reaction is L-dehydroascorbate + 2 glutathione = glutathione disulfide + L-ascorbate. It catalyses the reaction methylarsonate + 2 glutathione + H(+) = methylarsonous acid + glutathione disulfide + H2O. Its function is as follows. Exhibits glutathione-dependent thiol transferase activity. Has high dehydroascorbate reductase activity and may contribute to the recycling of ascorbic acid. Participates in the biotransformation of inorganic arsenic and reduces monomethylarsonic acid (MMA). This Rattus norvegicus (Rat) protein is Glutathione S-transferase omega-2 (Gsto2).